The following is a 188-amino-acid chain: dCTP deaminase (188 aa).

DCTP contacts are provided by residues 111 to 116, 135 to 137, Gln156, Tyr170, and Gln180; these read KSTYAR and TLE. Residue Glu137 is the Proton donor/acceptor of the active site.

Belongs to the dCTP deaminase family. As to quaternary structure, homotrimer.

The enzyme catalyses dCTP + H2O + H(+) = dUTP + NH4(+). Its pathway is pyrimidine metabolism; dUMP biosynthesis; dUMP from dCTP (dUTP route): step 1/2. In terms of biological role, catalyzes the deamination of dCTP to dUTP. This Pseudomonas putida (strain ATCC 700007 / DSM 6899 / JCM 31910 / BCRC 17059 / LMG 24140 / F1) protein is dCTP deaminase.